Consider the following 296-residue polypeptide: 4-diphosphocytidyl-2-C-methyl-D-erythritol kinase (296 aa).

Lysine 11 is an active-site residue. 96 to 106 (PVSSGLAGGSA) is a binding site for ATP. The active site involves aspartate 136.

This sequence belongs to the GHMP kinase family. IspE subfamily.

It catalyses the reaction 4-CDP-2-C-methyl-D-erythritol + ATP = 4-CDP-2-C-methyl-D-erythritol 2-phosphate + ADP + H(+). It participates in isoprenoid biosynthesis; isopentenyl diphosphate biosynthesis via DXP pathway; isopentenyl diphosphate from 1-deoxy-D-xylulose 5-phosphate: step 3/6. In terms of biological role, catalyzes the phosphorylation of the position 2 hydroxy group of 4-diphosphocytidyl-2C-methyl-D-erythritol. This chain is 4-diphosphocytidyl-2-C-methyl-D-erythritol kinase, found in Anaplasma phagocytophilum (strain HZ).